A 506-amino-acid chain; its full sequence is U3 small nucleolar RNA-associated protein 18 homolog (506 aa).

The segment covering 1–11 (MSSDESSDGLE) has biased composition (acidic residues). 2 disordered regions span residues 1 to 44 (MSSD…SQAK) and 69 to 126 (AKSV…PLNH). Basic and acidic residues predominate over residues 24 to 37 (EQEKPAKIKRERYI). Ser102, Ser104, Ser164, and Ser165 each carry phosphoserine. WD repeat units follow at residues 203 to 242 (YAEGNATSIQFHPTSTAALVAGMNGLATIYAVDGQKNERL), 331 to 370 (KQEGKVKGFTWSSDSKRILVCGSTSNVSVLNLRQNLIEHI), 372 to 413 (MDDG…ASKA), and 469 to 505 (EKVGFVTSMAFSPHSSFLAFATKGKQVPLFRLKYFKG).

It belongs to the WD repeat UTP18 family. Component of U3 snoRNP complex.

The protein resides in the nucleus. It localises to the nucleolus. In terms of biological role, component of a nucleolar small nuclear ribonucleoprotein particle (snoRNP) thought to participate in the processing and modification of pre-ribosomal RNA. Regulation of cell size by ribosome synthesis is an important parameter for stem cell maintenance and function. This is U3 small nucleolar RNA-associated protein 18 homolog (wcd) from Drosophila melanogaster (Fruit fly).